The sequence spans 500 residues: NAD(P)H-quinone oxidoreductase chain 4, chloroplastic (500 aa).

Helical transmembrane passes span 4–24 (FPWL…MLFL), 35–55 (YTIC…CYNF), 87–107 (IGTI…AFPV), 113–130 (LFHF…GSFS), 134–154 (LLLF…LLAM), 167–187 (FILY…GISL), 211–231 (ILFY…IPLH), 242–262 (HYST…YGLV), 272–292 (AHSM…IYAA), 305–325 (IAYS…SITD), 330–350 (GAIL…FLAG), 364–384 (MGGM…LSMA), 386–406 (LALP…GIIT), 411–431 (FLIF…LTPI), and 462–482 (LFLS…PDFV).

This sequence belongs to the complex I subunit 4 family.

It is found in the plastid. It localises to the chloroplast thylakoid membrane. The enzyme catalyses a plastoquinone + NADH + (n+1) H(+)(in) = a plastoquinol + NAD(+) + n H(+)(out). The catalysed reaction is a plastoquinone + NADPH + (n+1) H(+)(in) = a plastoquinol + NADP(+) + n H(+)(out). This is NAD(P)H-quinone oxidoreductase chain 4, chloroplastic from Capsella bursa-pastoris (Shepherd's purse).